We begin with the raw amino-acid sequence, 361 residues long: Solute carrier family 25 member 3 (361 aa).

Residues 1 to 49 (MFSSVAHLARANPFNTPHLQLVHDGLGDFRSRPPGPTGQPRRPRNLAAA) constitute a mitochondrion transit peptide. A disordered region spans residues 25–44 (GLGDFRSRPPGPTGQPRRPR). Residues 50 to 62 (AVEEYSCEFGSAK) are Mitochondrial intermembrane-facing. Solcar repeat units lie at residues 62 to 146 (KYYA…FKVL), 159 to 243 (WRTS…TVEA), and 260 to 338 (EQLV…VKVY). A helical membrane pass occupies residues 63–85 (YYALCGFGGVLSCGLTHTAVVPL). Residues 86 to 120 (DLVKCRMQVDPQKYKGIFNGFSVTLKEDGVRGLAK) are Mitochondrial matrix-facing. N6-acetyllysine is present on Lys98. An N6-methyllysine modification is found at Lys111. A helical transmembrane segment spans residues 121–140 (GWAPTFLGYSMQGLCKFGFY). The Mitochondrial intermembrane portion of the chain corresponds to 141 to 160 (EVFKVLYSNMLGEENTYLWR). The helical transmembrane segment at 161–182 (TSLYLAASASAEFFADIALAPM) threads the bilayer. Topologically, residues 183–217 (EAAKVRIQTQPGYANTLRDAAPKMYKEEGLKAFYK) are mitochondrial matrix. Phosphotyrosine is present on Tyr195. Lys208 bears the N6-acetyllysine mark. Residues 218-237 (GVAPLWMRQIPYTMMKFACF) traverse the membrane as a helical segment. Over 238–260 (ERTVEALYKFVVPKPRSECSKPE) the chain is Mitochondrial intermembrane. A helical membrane pass occupies residues 261–283 (QLVVTFVAGYIAGVFCAIVSHPA). Over 284 to 313 (DSVVSVLNKEKGSSASLVLKRLGFKGVWKG) the chain is Mitochondrial matrix. Residues 314–332 (LFARIIMIGTLTALQWFIY) form a helical membrane-spanning segment. At 333 to 361 (DSVKVYFRLPRPPPPEMPESLKKKLGLTQ) the chain is on the mitochondrial intermembrane side.

This sequence belongs to the mitochondrial carrier (TC 2.A.29) family. Interacts with PPIF; the interaction is impaired by CsA.

Its subcellular location is the mitochondrion inner membrane. It carries out the reaction phosphate(in) + H(+)(in) = phosphate(out) + H(+)(out). Inorganic ion transporter that transports phosphate or copper ions across the mitochondrial inner membrane into the matrix compartment. Mediates proton-coupled symport of phosphate ions necessary for mitochondrial oxidative phosphorylation of ADP to ATP. Transports copper ions probably in the form of anionic copper(I) complexes to maintain mitochondrial matrix copper pool and to supply copper for cytochrome C oxidase complex assembly. May also play a role in regulation of the mitochondrial permeability transition pore (mPTP). The chain is Solute carrier family 25 member 3 from Pongo abelii (Sumatran orangutan).